We begin with the raw amino-acid sequence, 128 residues long: Disintegrin ocellatusin (128 aa).

The first 20 residues, 1 to 20, serve as a signal peptide directing secretion; that stretch reads MIPVLLVTICLAVFPFQGSS. The propeptide occupies 21-65; it reads IILESGNINDYEIVYPKKVAVLPTGAMNSAHPCYDPVTCQPKEKE. Positions 26 to 112 constitute a Disintegrin domain; sequence GNINDYEIVY…DCPRNPYKGE (87 aa). 5 disulfides stabilise this stretch: C53-C59, C67-C76, C72-C97, C73-C102, and C85-C104. The Cell attachment site signature appears at 89–91; that stretch reads RGD. Positions 116–128 are excised as a propeptide; sequence MEWPAPAKGSVLM.

In terms of assembly, monomer. Expressed by the venom gland.

The protein resides in the secreted. Functionally, the disintegrin ocellatusin-10c1 is a poor inhibitor of platelet aggregation. The disintegrin inhibits the adhesion of cells expressing the RGD-dependent integrin alpha-5/beta-1 (ITGA5/ITGB1) to immobilized fibronectin. Inhibition on alpha-2b/beta-3 (ITGA2B/ITGB3) is low, and there is no inhibition on alpha-1/beta-1 (ITGA1/ITGB1), alpha-2/beta-1 (ITGA2/ITGB1) and alpha-6/beta-1 (ITGA6/ITGB1). Its function is as follows. The short monomeric disintegrin ocellatusin inhibits ADP-induced platelet aggregation (IC(50)=168 nM). Inhibits alpha-5/beta-1 (ITGA5/ITGB1) integrin and induces the expression of a ligand-induced binding site epitope on beta-1 integrin subunit. Has a direct chemotactic stimulus on human neutrophils in vitro. The polypeptide is Disintegrin ocellatusin (Echis ocellatus (Ocellated saw-scaled viper)).